A 185-amino-acid polypeptide reads, in one-letter code: Ribosome-recycling factor (185 aa).

It belongs to the RRF family.

The protein resides in the cytoplasm. Functionally, responsible for the release of ribosomes from messenger RNA at the termination of protein biosynthesis. May increase the efficiency of translation by recycling ribosomes from one round of translation to another. This Actinobacillus pleuropneumoniae serotype 5b (strain L20) protein is Ribosome-recycling factor.